A 475-amino-acid chain; its full sequence is Stromelysin-1 (475 aa).

Positions 1 to 17 are cleaved as a signal peptide; the sequence is MKGLPVLLWLCTAVCSS. Positions 18–97 are cleaved as a propeptide — activation peptide; that stretch reads YPLHGSEEDA…PRCGVPDVGG (80 aa). The short motif at 88-95 is the Cysteine switch element; it reads PRCGVPDV. A Zn(2+)-binding site is contributed by Cys90. A glycan (N-linked (GlcNAc...) asparagine) is linked at Asn118. Ca(2+) is bound by residues Asp122 and Asp156. His166 and Asp168 together coordinate Zn(2+). Asp173, Gly174, Gly176, and Val178 together coordinate Ca(2+). His181 is a Zn(2+) binding site. Residues Gly188, Asn190, and Asp192 each contribute to the Ca(2+) site. His194 contributes to the Zn(2+) binding site. Ca(2+) contacts are provided by Asp196, Asp197, and Glu199. His216 provides a ligand contact to Zn(2+). Residue Glu217 is part of the active site. Positions 220 and 226 each coordinate Zn(2+). Hemopexin repeat units lie at residues 285-334, 335-381, 383-431, and 432-475; these read LPMC…WPSL, PSNM…GLPE, VQKI…FPGI, and GTKV…WFNC. Residues Cys288 and Cys475 are joined by a disulfide bond. Residue Asp295 coordinates Ca(2+). Ca(2+)-binding residues include Asp387 and Asp436.

It belongs to the peptidase M10A family. Requires Ca(2+) as cofactor. Zn(2+) serves as cofactor.

The protein localises to the secreted. It localises to the extracellular space. Its subcellular location is the extracellular matrix. It catalyses the reaction Preferential cleavage where P1', P2' and P3' are hydrophobic residues.. Its activity is regulated as follows. Inhibited by a synthetic peptide corresponding to the inhibitory cysteine switch motif. Inhibited by ethylenediaminetetraacetic acid (EDTA), 1,10-pheanthroline, 2-mecaptoethanol, dithiothreitol and metalloproteinase inhibitor protein TIMP. Can degrade fibronectin, laminin, gelatins of type I, III, IV, and V; collagens III, IV, X, and IX, and cartilage proteoglycans. Activates procollagenase. In terms of biological role, metalloproteinase with a rather broad substrate specificity that can degrade fibronectin, laminin, gelatins of type I, III, IV, and V; collagens III, IV, X, and IX, and cartilage proteoglycans. Activates different molecules including growth factors, plasminogen or other matrix metalloproteinases such as MMP9. Once released into the extracellular matrix (ECM), the inactive pro-enzyme is activated by the plasmin cascade signaling pathway. Also acts intracellularly. For example, in dopaminergic neurons, gets activated by the serine protease HTRA2 upon stress and plays a pivotal role in DA neuronal degeneration by mediating microglial activation and alpha-synuclein/SNCA cleavage. In addition, plays a role in immune response and possesses antiviral activity against various viruses. Mechanistically, translocates from the cytoplasm into the cell nucleus upon virus infection to influence NF-kappa-B activities. This chain is Stromelysin-1 (Mmp3), found in Rattus norvegicus (Rat).